Here is a 239-residue protein sequence, read N- to C-terminus: tRNA (guanine-N(7)-)-methyltransferase (239 aa).

S-adenosyl-L-methionine-binding residues include Glu69, Glu94, Asp121, and Asp144. Asp144 is an active-site residue. Lys148 serves as a coordination point for substrate. The segment at 150–155 is interaction with RNA; that stretch reads RHNKRR. Substrate-binding positions include Asp180 and 217–220; that span reads TKFE.

The protein belongs to the class I-like SAM-binding methyltransferase superfamily. TrmB family. Monomer.

It catalyses the reaction guanosine(46) in tRNA + S-adenosyl-L-methionine = N(7)-methylguanosine(46) in tRNA + S-adenosyl-L-homocysteine. Its pathway is tRNA modification; N(7)-methylguanine-tRNA biosynthesis. Its function is as follows. Catalyzes the formation of N(7)-methylguanine at position 46 (m7G46) in tRNA. This is tRNA (guanine-N(7)-)-methyltransferase from Shigella dysenteriae serotype 1 (strain Sd197).